The chain runs to 100 residues: Small ribosomal subunit protein uS14 (100 aa).

It belongs to the universal ribosomal protein uS14 family. In terms of assembly, part of the 30S ribosomal subunit. Contacts proteins S3 and S10.

Its function is as follows. Binds 16S rRNA, required for the assembly of 30S particles and may also be responsible for determining the conformation of the 16S rRNA at the A site. This Prochlorococcus marinus (strain MIT 9215) protein is Small ribosomal subunit protein uS14.